The sequence spans 270 residues: SPbeta prophage-derived DNA ligase-like protein LigB (270 aa).

Lys-25 acts as the N6-AMP-lysine intermediate in catalysis.

It belongs to the ATP-dependent DNA ligase family.

This Bacillus subtilis (strain 168) protein is SPbeta prophage-derived DNA ligase-like protein LigB (ligB).